Consider the following 715-residue polypeptide: Polyribonucleotide nucleotidyltransferase (715 aa).

Mg(2+)-binding residues include D498 and D504. The KH domain occupies 565–625 (PKVCMMQIKP…ETVKKTVAFI (61 aa)). The S1 motif domain maps to 635 to 706 (GTCYQASILR…DRGRIDFLLL (72 aa)).

This sequence belongs to the polyribonucleotide nucleotidyltransferase family. Requires Mg(2+) as cofactor.

The protein resides in the cytoplasm. The enzyme catalyses RNA(n+1) + phosphate = RNA(n) + a ribonucleoside 5'-diphosphate. Involved in mRNA degradation. Catalyzes the phosphorolysis of single-stranded polyribonucleotides processively in the 3'- to 5'-direction. The protein is Polyribonucleotide nucleotidyltransferase of Onion yellows phytoplasma (strain OY-M).